Reading from the N-terminus, the 857-residue chain is Major vault protein (857 aa).

MVP repeat units lie at residues 18 to 60 (PYYY…ITIP), 62 to 122 (RHYC…KVVQ), 123 to 174 (ANAA…TIIR), 175 to 227 (PNQA…YVLT), 228 to 282 (EKNA…NTLT), 284 to 332 (RQYC…FILG), 333 to 387 (EDEG…IPLD), and 388 to 441 (ENEG…VAER). Residues 434 to 453 (AKDPVAERSDRRGDRAAPRA) form a disordered region. The span at 437–453 (PVAERSDRRGDRAAPRA) shows a compositional bias: basic and acidic residues. The 30-residue stretch at 665–694 (ARHEAERLEQEARGRLERQKIMDEAEAEKS) folds into the IQ domain.

The vault ribonucleoprotein particle is a huge (400 A x 670 A) cage structure of 12.9 MDa. It consists of a dimer of half-vaults, with each half-vault comprising 39 identical major vault protein (MVP) chains, PARP4 and one or more vault RNAs (vRNAs). As to expression, expressed in embryos, tube feet and coelomocytes (at protein level). Not expressed in sperm cells (at protein level).

It is found in the cytoplasm. It localises to the nucleus. In terms of biological role, required for normal vault structure. Vaults are multi-subunit structures that may act as scaffolds for proteins involved in signal transduction. Vaults may also play a role in nucleo-cytoplasmic transport. The polypeptide is Major vault protein (Strongylocentrotus purpuratus (Purple sea urchin)).